The chain runs to 520 residues: Amine oxidase [flavin-containing] B (520 aa).

S2 carries the post-translational modification N-acetylserine. The Cytoplasmic segment spans residues 2-489; that stretch reads SSKCDVVVVG…TFLERHLPSV (488 aa). The residue at position 52 (K52) is an N6-acetyllysine. C397 bears the S-8alpha-FAD cysteine mark. A helical; Anchor for type IV membrane protein membrane pass occupies residues 490-516; sequence PGLLRLIGLTAIFSATALGYLAHKRGL. Residues 517-520 are Mitochondrial intermembrane-facing; it reads LVRV.

The protein belongs to the flavin monoamine oxidase family. In terms of assembly, monomer, homo- or heterodimer (containing two subunits of similar size). Each subunit contains a covalently bound flavin. Enzymatically active as monomer. The cofactor is FAD.

It is found in the mitochondrion outer membrane. It carries out the reaction a secondary aliphatic amine + O2 + H2O = a primary amine + an aldehyde + H2O2. The catalysed reaction is (R)-adrenaline + O2 + H2O = (R)-3,4-dihydroxymandelaldehyde + methylamine + H2O2. The enzyme catalyses a primary methyl amine + O2 + H2O = an aldehyde + H2O2 + NH4(+). It catalyses the reaction benzylamine + O2 + H2O = benzaldehyde + H2O2 + NH4(+). It carries out the reaction dopamine + O2 + H2O = 3,4-dihydroxyphenylacetaldehyde + H2O2 + NH4(+). The catalysed reaction is tyramine + O2 + H2O = (4-hydroxyphenyl)acetaldehyde + H2O2 + NH4(+). The enzyme catalyses (R)-noradrenaline + O2 + H2O = (R)-3,4-dihydroxymandelaldehyde + H2O2 + NH4(+). It catalyses the reaction 2-phenylethylamine + O2 + H2O = 2-phenylacetaldehyde + H2O2 + NH4(+). It carries out the reaction N-acetylputrescine + O2 + H2O = 4-acetamidobutanal + H2O2 + NH4(+). In terms of biological role, catalyzes the oxidative deamination of primary and some secondary amines such as neurotransmitters, and exogenous amines including the tertiary amine, neurotoxin 1-methyl-4-phenyl-1,2,3,6-tetrahydropyridine (MPTP), with concomitant reduction of oxygen to hydrogen peroxide and participates in the metabolism of neuroactive and vasoactive amines in the central nervous system and peripheral tissues. Preferentially degrades benzylamine and phenylethylamine. This is Amine oxidase [flavin-containing] B from Sus scrofa (Pig).